The chain runs to 284 residues: MEMO1 family protein YG5714_2180 (284 aa).

Belongs to the MEMO1 family.

In Saccharolobus islandicus (strain Y.G.57.14 / Yellowstone #1) (Sulfolobus islandicus), this protein is MEMO1 family protein YG5714_2180.